Consider the following 171-residue polypeptide: Galectin-related protein A (171 aa).

The 133-residue stretch at P38–L170 folds into the Galectin domain.

Functionally, does not bind lactose, and may not bind carbohydrates. This Xenopus laevis (African clawed frog) protein is Galectin-related protein A (lgalsl-a).